Here is a 706-residue protein sequence, read N- to C-terminus: Transcription factor 12 (706 aa).

Residues 25 to 109 (AMFSPPVNSG…TPFMNSNLIG (85 aa)) form a disordered region. Composition is skewed to polar residues over residues 30 to 48 (PVNS…QFSG) and 56 to 76 (GTTS…SRGF). Phosphoserine is present on residues Ser-47, Ser-67, and Ser-79. Basic and acidic residues predominate over residues 81 to 93 (HYSDHLNDSRLGT). Phosphoserine is present on Ser-98. Lys-110 is covalently cross-linked (Glycyl lysine isopeptide (Lys-Gly) (interchain with G-Cter in SUMO2)). Residues Ser-116 and Ser-124 each carry the phosphoserine modification. Positions 119–140 (LYSRDSGLSGCQSSLLRQDLGL) are leucine-zipper. 2 disordered regions span residues 140-222 (LGSP…SMFA) and 249-313 (FGGI…ASHT). Residues 144–163 (AQLSSSGKPGTPYYSFSATS) are compositionally biased toward polar residues. Lys-181 is covalently cross-linked (Glycyl lysine isopeptide (Lys-Gly) (interchain with G-Cter in SUMO2)). Positions 181 to 188 (KKVRKVPP) match the Nuclear localization signal motif. Residues 256-269 (STSHMSQSSSYGSL) show a composition bias toward low complexity. The span at 282–306 (VSPTDINTSLPPMSSFHRGSTSSSP) shows a compositional bias: polar residues. The residue at position 313 (Thr-313) is a Phosphothreonine. Residue Ser-333 is modified to Phosphoserine. Disordered stretches follow at residues 349 to 392 (PDHT…YENS) and 520 to 604 (HKTP…ERRM). A compositionally biased stretch (low complexity) spans 352-363 (TSSSFPSNPSTP). 2 stretches are compositionally biased toward polar residues: residues 364–376 (VGSP…TSQW) and 383–392 (APSSPSYENS). Ser-392 bears the Phosphoserine mark. 2 stretches are compositionally biased toward basic and acidic residues: residues 542-554 (IKTE…ENLH) and 560-575 (DDMK…DIKV). Lys-543 is covalently cross-linked (Glycyl lysine isopeptide (Lys-Gly) (interchain with G-Cter in SUMO2)). Phosphoserine is present on Ser-564. Residue Lys-574 forms a Glycyl lysine isopeptide (Lys-Gly) (interchain with G-Cter in SUMO2) linkage. Thr-581 is subject to Phosphothreonine. Ser-582 and Ser-583 each carry phosphoserine. Residues 592–604 (PEQKIEREKERRM) are compositionally biased toward basic and acidic residues. The bHLH domain maps to 601-654 (ERRMANNARERLRVRDINEAFKELGRMCQLHLKSEKPQTKLLILHQAVAVILSL). Glycyl lysine isopeptide (Lys-Gly) (interchain with G-Cter in SUMO2) cross-links involve residues Lys-633 and Lys-677. The tract at residues 656–679 (QQVRERNLNPKAACLKRREEEKVS) is class A specific domain. A disordered region spans residues 674 to 706 (EEEKVSAASAEPPNTLPGAHPGLSESTNPMGHL). Polar residues predominate over residues 697–706 (SESTNPMGHL).

Efficient DNA binding requires dimerization with another bHLH protein. Forms homo- or heterooligomers with myogenin, E12 and ITF2 proteins and RUNX1T1. Interacts with PTF1A. Interacts with NEUROD2. Interacts with BHLHA9. In terms of tissue distribution, widely expressed.

Its subcellular location is the nucleus. Functionally, transcriptional regulator. Involved in the initiation of neuronal differentiation. Activates transcription by binding to the E box (5'-CANNTG-3'). May be involved in the functional network that regulates the development of the GnRH axis. The protein is Transcription factor 12 (Tcf12) of Mus musculus (Mouse).